Consider the following 128-residue polypeptide: MIAKSSSKKKSKKVITDGIAHIHATFNNTIVMITDRHGNTVCWATSGGSGFRGSRKSTPFAAQVAAGSCGEKALAFGMKNLEVHVKGPGPGRDSAIRGLNAQGLKIQSITDVTPIPHNGCRPSKKRRV.

This sequence belongs to the universal ribosomal protein uS11 family. Part of the 30S ribosomal subunit. Interacts with proteins S7 and S18. Binds to IF-3.

In terms of biological role, located on the platform of the 30S subunit, it bridges several disparate RNA helices of the 16S rRNA. Forms part of the Shine-Dalgarno cleft in the 70S ribosome. The polypeptide is Small ribosomal subunit protein uS11 (Vesicomyosocius okutanii subsp. Calyptogena okutanii (strain HA)).